The sequence spans 188 residues: MIDKEKIKKAVREILEAIGEDPDREGLLETPDRVARMYEEIFSGLHTDVKDVIKIFQEDEHQEIILVKDIPLYSMCEHHLLPFIGVAHVAYLPRKGRILGLSKVARIVDVLSKRPQLQERLTSEIADTIMEAVNPLGVAVVIEAEHLCMTMRGVKKPGSKTVTSALRGIFRTDQKARAEVMALINSKR.

Zn(2+) is bound by residues Cys-76, His-79, and Cys-148.

Belongs to the GTP cyclohydrolase I family. In terms of assembly, toroid-shaped homodecamer, composed of two pentamers of five dimers.

The enzyme catalyses GTP + H2O = 7,8-dihydroneopterin 3'-triphosphate + formate + H(+). The protein operates within cofactor biosynthesis; 7,8-dihydroneopterin triphosphate biosynthesis; 7,8-dihydroneopterin triphosphate from GTP: step 1/1. This is GTP cyclohydrolase 1 from Caldanaerobacter subterraneus subsp. tengcongensis (strain DSM 15242 / JCM 11007 / NBRC 100824 / MB4) (Thermoanaerobacter tengcongensis).